The sequence spans 156 residues: Cyanate hydratase (156 aa).

Catalysis depends on residues Arg96, Glu99, and Ser122.

Belongs to the cyanase family.

It catalyses the reaction cyanate + hydrogencarbonate + 3 H(+) = NH4(+) + 2 CO2. Functionally, catalyzes the reaction of cyanate with bicarbonate to produce ammonia and carbon dioxide. This is Cyanate hydratase from Escherichia coli O9:H4 (strain HS).